Consider the following 325-residue polypeptide: Pyruvate dehydrogenase E1 component subunit beta (325 aa).

Glu-60 lines the thiamine diphosphate pocket.

In terms of assembly, heterodimer of an alpha and a beta chain. Thiamine diphosphate serves as cofactor.

It carries out the reaction N(6)-[(R)-lipoyl]-L-lysyl-[protein] + pyruvate + H(+) = N(6)-[(R)-S(8)-acetyldihydrolipoyl]-L-lysyl-[protein] + CO2. Its function is as follows. The pyruvate dehydrogenase complex catalyzes the overall conversion of pyruvate to acetyl-CoA and CO(2). It contains multiple copies of three enzymatic components: pyruvate dehydrogenase (E1), dihydrolipoamide acetyltransferase (E2) and lipoamide dehydrogenase (E3). The protein is Pyruvate dehydrogenase E1 component subunit beta (pdhB) of Staphylococcus aureus (strain Mu50 / ATCC 700699).